The following is a 469-amino-acid chain: Citrate synthase, mitochondrial (469 aa).

The N-terminal 33 residues, 1-33 (MAPVMRLGSAALRSSIHLTSRQTAFTAARCYSS), are a transit peptide targeting the mitochondrion. H352 is an active-site residue.

Belongs to the citrate synthase family.

Its subcellular location is the mitochondrion matrix. It carries out the reaction oxaloacetate + acetyl-CoA + H2O = citrate + CoA + H(+). It participates in carbohydrate metabolism; tricarboxylic acid cycle; isocitrate from oxaloacetate: step 1/2. In Neurospora crassa (strain ATCC 24698 / 74-OR23-1A / CBS 708.71 / DSM 1257 / FGSC 987), this protein is Citrate synthase, mitochondrial (cit-1).